A 459-amino-acid chain; its full sequence is Ribulose bisphosphate carboxylase large chain (459 aa).

Lysine 4 is modified (N6,N6,N6-trimethyllysine). Residues asparagine 113 and threonine 163 each coordinate substrate. Lysine 165 functions as the Proton acceptor in the catalytic mechanism. Lysine 167 contributes to the substrate binding site. Residues lysine 191, aspartate 193, and glutamate 194 each coordinate Mg(2+). N6-carboxylysine is present on lysine 191. The active-site Proton acceptor is histidine 284. Substrate-binding residues include arginine 285, histidine 317, and serine 369.

The protein belongs to the RuBisCO large chain family. Type I subfamily. Heterohexadecamer of 8 large chains and 8 small chains; disulfide-linked. The disulfide link is formed within the large subunit homodimers. The cofactor is Mg(2+). The disulfide bond which can form in the large chain dimeric partners within the hexadecamer appears to be associated with oxidative stress and protein turnover.

It is found in the plastid. It localises to the chloroplast. The catalysed reaction is 2 (2R)-3-phosphoglycerate + 2 H(+) = D-ribulose 1,5-bisphosphate + CO2 + H2O. The enzyme catalyses D-ribulose 1,5-bisphosphate + O2 = 2-phosphoglycolate + (2R)-3-phosphoglycerate + 2 H(+). RuBisCO catalyzes two reactions: the carboxylation of D-ribulose 1,5-bisphosphate, the primary event in carbon dioxide fixation, as well as the oxidative fragmentation of the pentose substrate in the photorespiration process. Both reactions occur simultaneously and in competition at the same active site. The sequence is that of Ribulose bisphosphate carboxylase large chain from Parnassia fimbriata (Fringed grass-of-Parnassus).